The following is a 598-amino-acid chain: Probable polysaccharide biosynthesis protein EpsC (598 aa).

The next 4 membrane-spanning stretches (helical) occupy residues 1 to 21, 31 to 51, 63 to 83, and 87 to 107; these read MIIA…YQFL, GALL…AFLF, LGEL…TGVI, and VYHT…LLSI.

The protein belongs to the polysaccharide synthase family.

The protein resides in the cell membrane. In terms of biological role, involved in biofilm formation. The polypeptide is Probable polysaccharide biosynthesis protein EpsC (epsC) (Bacillus subtilis (strain 168)).